The chain runs to 342 residues: NADH-quinone oxidoreductase subunit H (342 aa).

Helical transmembrane passes span 15–35, 86–106, 119–139, 159–179, 190–210, 251–271, 277–297, and 316–336; these read LLIITALQALAILVPLMLMVA, VLFILAPLLTFILAMIAWAVV, VGVLYLFAISSLGVYGVIIAG, VSYEVSIGFVMVAILLCVGSL, HVWFVLPMLPMAVIFFISGLA, FMICAMTTLLFLGGWLPPFDI, VPGPIWFVLKVCALMFVFFWV, and VFLPFSLVWLLLTACVLELAG.

It belongs to the complex I subunit 1 family. NDH-1 is composed of 14 different subunits. Subunits NuoA, H, J, K, L, M, N constitute the membrane sector of the complex.

Its subcellular location is the cell inner membrane. It carries out the reaction a quinone + NADH + 5 H(+)(in) = a quinol + NAD(+) + 4 H(+)(out). In terms of biological role, NDH-1 shuttles electrons from NADH, via FMN and iron-sulfur (Fe-S) centers, to quinones in the respiratory chain. The immediate electron acceptor for the enzyme in this species is believed to be ubiquinone. Couples the redox reaction to proton translocation (for every two electrons transferred, four hydrogen ions are translocated across the cytoplasmic membrane), and thus conserves the redox energy in a proton gradient. This subunit may bind ubiquinone. This chain is NADH-quinone oxidoreductase subunit H, found in Granulibacter bethesdensis (strain ATCC BAA-1260 / CGDNIH1).